The sequence spans 107 residues: Phosphoribosyl-ATP pyrophosphatase (107 aa).

This sequence belongs to the PRA-PH family.

It localises to the cytoplasm. The enzyme catalyses 1-(5-phospho-beta-D-ribosyl)-ATP + H2O = 1-(5-phospho-beta-D-ribosyl)-5'-AMP + diphosphate + H(+). The protein operates within amino-acid biosynthesis; L-histidine biosynthesis; L-histidine from 5-phospho-alpha-D-ribose 1-diphosphate: step 2/9. This Azoarcus sp. (strain BH72) protein is Phosphoribosyl-ATP pyrophosphatase.